The following is a 466-amino-acid chain: Putative chitinase (466 aa).

A signal peptide spans M1–G17. One can recognise a GH18 domain in the interval F20–Y380. C24 and C49 form a disulfide bridge. The Proton donor role is filled by E141. The stretch at N408–E442 forms a coiled coil.

The protein belongs to the glycosyl hydrolase 18 family. As to expression, prismatic layer of shell (at protein level). Expressed primarily in the mantle with highest level in the mantle edge and lower level in the mantle pallium.

The protein resides in the secreted. The enzyme catalyses Random endo-hydrolysis of N-acetyl-beta-D-glucosaminide (1-&gt;4)-beta-linkages in chitin and chitodextrins.. In Pinctada maxima (Silver-lipped pearl oyster), this protein is Putative chitinase.